A 357-amino-acid polypeptide reads, in one-letter code: Beta-hexosaminidase (357 aa).

Substrate contacts are provided by residues Asp72, Arg80, Arg146, and 176–177; that span reads KH. The active-site Proton donor/acceptor is the His189. The Nucleophile role is filled by Asp260.

The protein belongs to the glycosyl hydrolase 3 family. NagZ subfamily.

The protein resides in the cytoplasm. The catalysed reaction is Hydrolysis of terminal non-reducing N-acetyl-D-hexosamine residues in N-acetyl-beta-D-hexosaminides.. It participates in cell wall biogenesis; peptidoglycan recycling. Its function is as follows. Plays a role in peptidoglycan recycling by cleaving the terminal beta-1,4-linked N-acetylglucosamine (GlcNAc) from peptide-linked peptidoglycan fragments, giving rise to free GlcNAc, anhydro-N-acetylmuramic acid and anhydro-N-acetylmuramic acid-linked peptides. The polypeptide is Beta-hexosaminidase (Hydrogenovibrio crunogenus (strain DSM 25203 / XCL-2) (Thiomicrospira crunogena)).